Reading from the N-terminus, the 319-residue chain is tRNA-cytidine(32) 2-sulfurtransferase (319 aa).

Positions 45-50 match the PP-loop motif motif; the sequence is SGGKDS. Cys120, Cys123, and Cys211 together coordinate [4Fe-4S] cluster.

It belongs to the TtcA family. In terms of assembly, homodimer. Requires Mg(2+) as cofactor. [4Fe-4S] cluster is required as a cofactor.

It localises to the cytoplasm. It carries out the reaction cytidine(32) in tRNA + S-sulfanyl-L-cysteinyl-[cysteine desulfurase] + AH2 + ATP = 2-thiocytidine(32) in tRNA + L-cysteinyl-[cysteine desulfurase] + A + AMP + diphosphate + H(+). The protein operates within tRNA modification. Catalyzes the ATP-dependent 2-thiolation of cytidine in position 32 of tRNA, to form 2-thiocytidine (s(2)C32). The sulfur atoms are provided by the cysteine/cysteine desulfurase (IscS) system. This is tRNA-cytidine(32) 2-sulfurtransferase from Shewanella woodyi (strain ATCC 51908 / MS32).